The sequence spans 158 residues: Large ribosomal subunit protein uL13 (158 aa).

It belongs to the universal ribosomal protein uL13 family. As to quaternary structure, part of the 50S ribosomal subunit.

This protein is one of the early assembly proteins of the 50S ribosomal subunit, although it is not seen to bind rRNA by itself. It is important during the early stages of 50S assembly. The polypeptide is Large ribosomal subunit protein uL13 (Rickettsia canadensis (strain McKiel)).